We begin with the raw amino-acid sequence, 375 residues long: Alcohol dehydrogenase 1A (375 aa).

S2 carries the N-acetylserine modification. S23 is modified (phosphoserine). Residue C47 coordinates Zn(2+). Residue 48 to 52 (GTDDH) participates in NAD(+) binding. 6 residues coordinate Zn(2+): H68, C98, C101, C104, C112, and C175. Residues 200-205 (GLGGVG), D224, K229, I270, 293-295 (VGV), 318-320 (AVL), and R370 each bind NAD(+).

This sequence belongs to the zinc-containing alcohol dehydrogenase family. In terms of assembly, dimer of identical or heterodimer of closely related subunits alpha, beta, or gamma that are encoded by genes ADH1A, ADH1B, and ADH1C, respectively. The cofactor is Zn(2+).

It localises to the cytoplasm. It catalyses the reaction a primary alcohol + NAD(+) = an aldehyde + NADH + H(+). The enzyme catalyses a secondary alcohol + NAD(+) = a ketone + NADH + H(+). It carries out the reaction butan-1-ol + NAD(+) = butanal + NADH + H(+). The catalysed reaction is 1-propanol + NAD(+) = propanal + NADH + H(+). In terms of biological role, alcohol dehydrogenase. Oxidizes primary as well as secondary alcohols. Ethanol is a very poor substrate. The polypeptide is Alcohol dehydrogenase 1A (ADH1A) (Pongo abelii (Sumatran orangutan)).